Reading from the N-terminus, the 259-residue chain is Type III pantothenate kinase (259 aa).

Aspartate 6–valine 13 provides a ligand contact to ATP. Residue glycine 107–arginine 110 participates in substrate binding. Aspartate 109 serves as the catalytic Proton acceptor. Aspartate 129 serves as a coordination point for K(+). An ATP-binding site is contributed by threonine 132. Residue threonine 184 participates in substrate binding.

The protein belongs to the type III pantothenate kinase family. In terms of assembly, homodimer. Requires NH4(+) as cofactor. K(+) is required as a cofactor.

The protein resides in the cytoplasm. The catalysed reaction is (R)-pantothenate + ATP = (R)-4'-phosphopantothenate + ADP + H(+). It participates in cofactor biosynthesis; coenzyme A biosynthesis; CoA from (R)-pantothenate: step 1/5. Catalyzes the phosphorylation of pantothenate (Pan), the first step in CoA biosynthesis. The sequence is that of Type III pantothenate kinase from Jannaschia sp. (strain CCS1).